Reading from the N-terminus, the 200-residue chain is MATEAPVEATEIPSVAAAETVEKQPHKLERKWTFWFDNQSKPKQGVAWGSSLRKAYTFETVEEFWSLYDQIFKPSKVTVNADFHLFKAGIEPKWEDPECANGGKWTATSSRKANLETMWLETLMALVGEQFDESEDICGVVASVRRSQDKLSLWTKTATNEAAQMGIGRKWKEIIDAEKISYSFHDDSKRERSAKSRYTV.

MRNA contacts are provided by residues 44 to 49, K76, and 94 to 95; these read QGVAWG and WE. C99 and C138 form a disulfide bridge. MRNA contacts are provided by residues 145-150 and 189-192; these read RRSQDK and KRER.

Belongs to the eukaryotic initiation factor 4E family. As to quaternary structure, EIF4F is a multi-subunit complex, the composition of which varies with external and internal environmental conditions. It is composed of at least EIF4A, EIF4E and EIF4G. EIF4E is also known to interact with other partners. In higher plants two isoforms of EIF4F have been identified, named isoform EIF4F and isoform EIF(iso)4F. Isoform EIF4F has subunits p220 and p26, whereas isoform EIF(iso)4F has subunits p82 and p28. In terms of assembly, (Microbial infection) Interacts with viral genome-linked protein (VPg); this interaction is possible in susceptible hosts but impaired in resistant plants. Post-translationally, according to the redox status, the Cys-99-Cys-138 disulfide bridge may have a role in regulating protein function by affecting its ability to bind capped mRNA. In terms of tissue distribution, mostly expressed in roots and leaves, and, to a lower extent, in stems, flowers and immature green fruits.

It localises to the cytoplasm. It is found in the nucleus. Component of the protein complex eIF4F, which is involved in the recognition of the mRNA cap, ATP-dependent unwinding of 5'-terminal secondary structure and recruitment of mRNA to the ribosome. Recognizes and binds the 7-methylguanosine-containing mRNA cap during an early step in the initiation of protein synthesis and facilitates ribosome binding by inducing the unwinding of the mRNAs secondary structures. Key component of recessive resistance to potyviruses. Its function is as follows. (Microbial infection) Susceptibility host factor required for viral infection by recruiting viral RNAs to the host ribosomal complex via an interaction with viral genome-linked protein (VPg). The polypeptide is Eukaryotic translation initiation factor isoform 4E (Solanum lycopersicum (Tomato)).